Reading from the N-terminus, the 350-residue chain is uncharacterized protein (350 aa).

The 164-residue stretch at 164-327 (NDPLPGYVEV…EKTRIGARVV (164 aa)) folds into the Integrase catalytic domain.

This is an uncharacterized protein from Sinorhizobium fredii (strain NBRC 101917 / NGR234).